The sequence spans 147 residues: Lysozyme C-2 (147 aa).

An N-terminal signal peptide occupies residues 1–18 (MKALVILGFLFLSVAVQG). The C-type lysozyme domain occupies 19–147 (KVFERCELAR…VSSYVEGCTL (129 aa)). Intrachain disulfides connect Cys-24–Cys-145, Cys-48–Cys-133, Cys-83–Cys-99, and Cys-95–Cys-113. Residues Glu-53 and Asp-71 contribute to the active site.

The protein belongs to the glycosyl hydrolase 22 family. In terms of assembly, monomer. In terms of tissue distribution, stomach-specific.

It carries out the reaction Hydrolysis of (1-&gt;4)-beta-linkages between N-acetylmuramic acid and N-acetyl-D-glucosamine residues in a peptidoglycan and between N-acetyl-D-glucosamine residues in chitodextrins.. Lysozymes have primarily a bacteriolytic function; those in tissues and body fluids are associated with the monocyte-macrophage system and enhance the activity of immunoagents. The polypeptide is Lysozyme C-2 (LYZ2) (Bos taurus (Bovine)).